A 657-amino-acid polypeptide reads, in one-letter code: tRNA 5-methylaminomethyl-2-thiouridine biosynthesis bifunctional protein MnmC (657 aa).

Residues 1-235 (MSDAHNAQLD…KREMLAGPFQ (235 aa)) form a tRNA (mnm(5)s(2)U34)-methyltransferase region. The tract at residues 261 to 657 (IGAGLAGCAT…QLIRGTGSPT (397 aa)) is FAD-dependent cmnm(5)s(2)U34 oxidoreductase.

This sequence in the N-terminal section; belongs to the methyltransferase superfamily. tRNA (mnm(5)s(2)U34)-methyltransferase family. In the C-terminal section; belongs to the DAO family. FAD is required as a cofactor.

It localises to the cytoplasm. It carries out the reaction 5-aminomethyl-2-thiouridine(34) in tRNA + S-adenosyl-L-methionine = 5-methylaminomethyl-2-thiouridine(34) in tRNA + S-adenosyl-L-homocysteine + H(+). Catalyzes the last two steps in the biosynthesis of 5-methylaminomethyl-2-thiouridine (mnm(5)s(2)U) at the wobble position (U34) in tRNA. Catalyzes the FAD-dependent demodification of cmnm(5)s(2)U34 to nm(5)s(2)U34, followed by the transfer of a methyl group from S-adenosyl-L-methionine to nm(5)s(2)U34, to form mnm(5)s(2)U34. In Ectopseudomonas mendocina (strain ymp) (Pseudomonas mendocina), this protein is tRNA 5-methylaminomethyl-2-thiouridine biosynthesis bifunctional protein MnmC.